A 1231-amino-acid polypeptide reads, in one-letter code: Fanconi anemia group J protein homolog (1231 aa).

The 438-residue stretch at 11–448 folds into the Helicase ATP-binding domain; it reads GGVKILFPCR…SDHEPLRAVC (438 aa). Residue 46–53 coordinates ATP; sequence SPTGSGKS. Disordered stretches follow at residues 104–126 and 147–166; these read TFSSDRQMNSTDNAPSNISGASS and QDDDFQTDRKRIRQSHDEQL. Basic and acidic residues predominate over residues 152 to 166; sequence QTDRKRIRQSHDEQL. Positions 155–173 match the Nuclear localization signal motif; the sequence is RKRIRQSHDEQLQARKRRC. [4Fe-4S] cluster contacts are provided by Cys291, Cys304, Cys316, and Cys356. The DEAH box motif lies at 399-402; that stretch reads DEAH. Residues 890-903 show a composition bias toward polar residues; the sequence is SKNQQQRMQMSSTN. 3 disordered regions span residues 890-924, 936-956, and 1195-1231; these read SKNQQQRMQMSSTNCDDEPSQGTSSSSKNTSPTSS, VSEFTQPTSSTQSSVTSPPEI, and GNENAFNIGRNKGTEQKNRENRLSRSRNKGVSSFFLD. Composition is skewed to low complexity over residues 909-924 and 940-954; these read SQGTSSSSKNTSPTSS and TQPTSSTQSSVTSPP. A compositionally biased stretch (basic and acidic residues) spans 1206–1217; the sequence is KGTEQKNRENRL.

This sequence belongs to the DEAD box helicase family. DEAH subfamily. It depends on [4Fe-4S] cluster as a cofactor.

It is found in the nucleus. It carries out the reaction Couples ATP hydrolysis with the unwinding of duplex DNA at the replication fork by translocating in the 5'-3' direction. This creates two antiparallel DNA single strands (ssDNA). The leading ssDNA polymer is the template for DNA polymerase III holoenzyme which synthesizes a continuous strand.. It catalyses the reaction ATP + H2O = ADP + phosphate + H(+). Its function is as follows. DNA-dependent helicase and 5' to 3' DNA helicase required for the maintenance of chromosomal stability. Involved in the repair of DNA double-strand breaks by homologous recombination. Involved in the repair of abasic sites at replication forks by promoting the degradation of DNA-protein cross-links: acts by catalyzing unfolding of HMCES DNA-protein cross-link via its helicase activity, exposing the underlying DNA and enabling cleavage of the DNA-protein adduct by the SPRTN metalloprotease. In Xenopus laevis (African clawed frog), this protein is Fanconi anemia group J protein homolog (brip1.L).